Here is a 234-residue protein sequence, read N- to C-terminus: Redox-sensing transcriptional repressor Rex (234 aa).

The H-T-H motif DNA-binding region spans threonine 17–phenylalanine 56. Glycine 91–glycine 96 contacts NAD(+).

It belongs to the transcriptional regulatory Rex family. In terms of assembly, homodimer.

It is found in the cytoplasm. In terms of biological role, modulates transcription in response to changes in cellular NADH/NAD(+) redox state. The polypeptide is Redox-sensing transcriptional repressor Rex (Deinococcus radiodurans (strain ATCC 13939 / DSM 20539 / JCM 16871 / CCUG 27074 / LMG 4051 / NBRC 15346 / NCIMB 9279 / VKM B-1422 / R1)).